The sequence spans 170 residues: UPF0260 protein Rpal_2074 (170 aa).

It belongs to the UPF0260 family.

This Rhodopseudomonas palustris (strain TIE-1) protein is UPF0260 protein Rpal_2074.